Here is a 697-residue protein sequence, read N- to C-terminus: Pentatricopeptide repeat-containing protein At5g46460, mitochondrial (697 aa).

The transit peptide at 1–36 directs the protein to the mitochondrion; that stretch reads MWSRAIFQRFRFRAFSISHVIHGKCYRSFSVTVEFQ. 14 PPR repeats span residues 39-64, 65-95, 96-130, 131-157, 158-192, 193-223, 224-258, 259-289, 290-324, 325-359, 360-390, 391-425, 426-456, and 463-497; these read EVLI…VPSP, HVSL…MPVR, DVVS…SVVS, WTAM…MPVK, DTAA…NVIS, WTTM…CIKS, TSRP…GFLY, EEYV…KVHE, QVAV…SILP, NQST…GLET, DAFV…IFKK, SIVS…NKEP, DEIT…MSSG, and KIQH…PNEM. The type E motif stretch occupies residues 498 to 573; the sequence is VWLALLSACR…KPGSSWVVIR (76 aa). The tract at residues 574–602 is type E(+) motif; the sequence is GKKHEFFSGDQPHCSRIYEKLEFLREKLK. A type DYW motif region spans residues 603–697; it reads ELGYAPDYRS…NGTCSCGDYW (95 aa).

The protein belongs to the PPR family. PCMP-H subfamily.

It localises to the mitochondrion. The chain is Pentatricopeptide repeat-containing protein At5g46460, mitochondrial (PCMP-H49) from Arabidopsis thaliana (Mouse-ear cress).